We begin with the raw amino-acid sequence, 345 residues long: Phosphoribosylformylglycinamidine cyclo-ligase (345 aa).

This sequence belongs to the AIR synthase family.

The protein resides in the cytoplasm. It catalyses the reaction 2-formamido-N(1)-(5-O-phospho-beta-D-ribosyl)acetamidine + ATP = 5-amino-1-(5-phospho-beta-D-ribosyl)imidazole + ADP + phosphate + H(+). Its pathway is purine metabolism; IMP biosynthesis via de novo pathway; 5-amino-1-(5-phospho-D-ribosyl)imidazole from N(2)-formyl-N(1)-(5-phospho-D-ribosyl)glycinamide: step 2/2. The protein is Phosphoribosylformylglycinamidine cyclo-ligase of Prochlorococcus marinus (strain MIT 9211).